The chain runs to 466 residues: Citrate synthase, mitochondrial (466 aa).

The transit peptide at 1–27 directs the protein to the mitochondrion; it reads MALLTAAARLLGTKNASCLVLAARHAS. The SIFI-degron signature appears at 2–21; sequence ALLTAAARLLGTKNASCLVL. Lysine 57 carries the post-translational modification N6-succinyllysine. Lysine 76 bears the N6-acetyllysine; alternate mark. Lysine 76 bears the N6-succinyllysine; alternate mark. Lysine 103 and lysine 193 each carry N6-succinyllysine. Residue histidine 301 is part of the active site. Lysine 321 and lysine 327 each carry N6-acetyllysine; alternate. Lysine 321 and lysine 327 each carry N6-succinyllysine; alternate. Histidine 347 is a catalytic residue. Oxaloacetate is bound at residue arginine 356. The residue at position 375 (lysine 375) is an N6-acetyllysine; alternate. Residue lysine 375 is modified to N6-succinyllysine; alternate. The residue at position 382 (lysine 382) is an N6-acetyllysine. Lysine 393 carries the N6-acetyllysine; alternate modification. At lysine 393 the chain carries N6-succinyllysine; alternate. Lysine 395 is modified (N6,N6,N6-trimethyllysine). Residue aspartate 402 is part of the active site. Arginine 428 and arginine 448 together coordinate oxaloacetate. Lysine 450 carries the post-translational modification N6-succinyllysine. An N6-acetyllysine; alternate modification is found at lysine 459. N6-succinyllysine; alternate is present on lysine 459.

This sequence belongs to the citrate synthase family. As to quaternary structure, homodimer. Post-translationally, methylated. Trimethylation at Lys-395 by CSKMT decreases citrate synthase activity. In terms of processing, in response to mitochondrial stress, the precursor protein is ubiquitinated by the SIFI complex in the cytoplasm before mitochondrial import, leading to its degradation. Within the SIFI complex, UBR4 initiates ubiquitin chain that are further elongated or branched by KCMF1.

The protein resides in the mitochondrion matrix. The catalysed reaction is oxaloacetate + acetyl-CoA + H2O = citrate + CoA + H(+). It functions in the pathway carbohydrate metabolism; tricarboxylic acid cycle; isocitrate from oxaloacetate: step 1/2. Functionally, key enzyme of the Krebs tricarboxylic acid cycle which catalyzes the synthesis of citrate from acetyl coenzyme A and oxaloacetate. The chain is Citrate synthase, mitochondrial (CS) from Homo sapiens (Human).